The primary structure comprises 406 residues: MKKNVKKVVLAYSGGLDTSVILKWLEDNYKCEVVTFTADIGQNEDLKPIKEKALKLGIKKENIFIKDLREEFVRDYVFPMFRANAVYEGEYLLGTSIARPLISKYLVEIAKKTNADAIAHGATGKGNDQVRFELGAYALNPNIKVIAPWREWDLNSREKLLAYAEKNGIDIAKKKGKSPYSMDANLLHISYEGLVLEDPNHAPEADMWRWTTDPKLAPNESEIIEIEYKNGNPIALNGKNLKPHEMLNELNNLGAKHGIGRLDIVENRFVGMKSRGCYETPGGTIMLKAHRAIESITIDKGAAHLKDELMPKYAELIYNGFWFSPERSMLQALIDKSQEYVNGKVKLELYKGNVIVIGRESKSDTLFNVNFSTFEEDSVYNQKDAEGFIKLNALRFIIAGKNGRKI.

ATP-binding positions include 11 to 19 (AYSGGLDTS) and A38. Residues Y91 and S96 each contribute to the L-citrulline site. Residue G121 coordinates ATP. L-aspartate-binding residues include T123, N127, and D128. Residue N127 coordinates L-citrulline. Positions 131, 181, 190, 266, and 278 each coordinate L-citrulline.

The protein belongs to the argininosuccinate synthase family. Type 1 subfamily. As to quaternary structure, homotetramer.

It is found in the cytoplasm. The catalysed reaction is L-citrulline + L-aspartate + ATP = 2-(N(omega)-L-arginino)succinate + AMP + diphosphate + H(+). The protein operates within amino-acid biosynthesis; L-arginine biosynthesis; L-arginine from L-ornithine and carbamoyl phosphate: step 2/3. This Campylobacter hominis (strain ATCC BAA-381 / DSM 21671 / CCUG 45161 / LMG 19568 / NCTC 13146 / CH001A) protein is Argininosuccinate synthase.